Reading from the N-terminus, the 365-residue chain is Chorismate synthase (365 aa).

Positions 48 and 54 each coordinate NADP(+). FMN is bound by residues 125–127 (RSS), 238–239 (NA), G278, 293–297 (KPTSS), and R319.

Belongs to the chorismate synthase family. Homotetramer. FMNH2 serves as cofactor.

The enzyme catalyses 5-O-(1-carboxyvinyl)-3-phosphoshikimate = chorismate + phosphate. Its pathway is metabolic intermediate biosynthesis; chorismate biosynthesis; chorismate from D-erythrose 4-phosphate and phosphoenolpyruvate: step 7/7. Functionally, catalyzes the anti-1,4-elimination of the C-3 phosphate and the C-6 proR hydrogen from 5-enolpyruvylshikimate-3-phosphate (EPSP) to yield chorismate, which is the branch point compound that serves as the starting substrate for the three terminal pathways of aromatic amino acid biosynthesis. This reaction introduces a second double bond into the aromatic ring system. The protein is Chorismate synthase of Alteromonas mediterranea (strain DSM 17117 / CIP 110805 / LMG 28347 / Deep ecotype).